Reading from the N-terminus, the 336-residue chain is Probable ADP-ribosylation factor GTPase-activating protein AGD13 (336 aa).

Positions 15-137 (KRRIRDLLNQ…EFLKPSLRIT (123 aa)) constitute an Arf-GAP domain. The C4-type zinc-finger motif lies at 30–53 (CADCGASDPKWASANIGVFICLKC). A C2 domain is found at 162–280 (RTNSSSQTMF…AMAFGDPEMF (119 aa)). Ca(2+)-binding residues include D249, S252, and D255.

It depends on Ca(2+) as a cofactor.

In terms of biological role, GTPase-activating protein (GAP) for ADP ribosylation factor (ARF). The polypeptide is Probable ADP-ribosylation factor GTPase-activating protein AGD13 (AGD13) (Arabidopsis thaliana (Mouse-ear cress)).